A 125-amino-acid polypeptide reads, in one-letter code: Holo-[acyl-carrier-protein] synthase (125 aa).

2 residues coordinate Mg(2+): D8 and E57.

Belongs to the P-Pant transferase superfamily. AcpS family. Mg(2+) serves as cofactor.

The protein resides in the cytoplasm. The catalysed reaction is apo-[ACP] + CoA = holo-[ACP] + adenosine 3',5'-bisphosphate + H(+). In terms of biological role, transfers the 4'-phosphopantetheine moiety from coenzyme A to a Ser of acyl-carrier-protein. The polypeptide is Holo-[acyl-carrier-protein] synthase (Neisseria meningitidis serogroup A / serotype 4A (strain DSM 15465 / Z2491)).